Consider the following 200-residue polypeptide: MTSSDTPSLRLASASPRRRELLASIGVAVEVAPADIDETPLEDEAPAAYVERLARRKAQVGAEGTTLPTLGSDTAVVVGRRILGKPRDREDAIAMLSALSGTTHEVVTGIAVTGPQGMLSTHVVTRVTLRELQPDEIEAYWRSGEPVDKAGAYAIQGLAAIFVERIEGSHSAVVGLPLFETAKLLTRQGVSLWGERPAVP.

D73 serves as the catalytic Proton acceptor.

Belongs to the Maf family. YhdE subfamily. A divalent metal cation is required as a cofactor.

It localises to the cytoplasm. It carries out the reaction dTTP + H2O = dTMP + diphosphate + H(+). The catalysed reaction is UTP + H2O = UMP + diphosphate + H(+). Functionally, nucleoside triphosphate pyrophosphatase that hydrolyzes dTTP and UTP. May have a dual role in cell division arrest and in preventing the incorporation of modified nucleotides into cellular nucleic acids. The protein is dTTP/UTP pyrophosphatase of Chromohalobacter salexigens (strain ATCC BAA-138 / DSM 3043 / CIP 106854 / NCIMB 13768 / 1H11).